The primary structure comprises 395 residues: Phosphopentomutase (395 aa).

Residues Asp16, Asp289, His294, Asp330, His331, and His342 each contribute to the Mn(2+) site.

It belongs to the phosphopentomutase family. Mn(2+) serves as cofactor.

The protein localises to the cytoplasm. The catalysed reaction is 2-deoxy-alpha-D-ribose 1-phosphate = 2-deoxy-D-ribose 5-phosphate. It catalyses the reaction alpha-D-ribose 1-phosphate = D-ribose 5-phosphate. Its pathway is carbohydrate degradation; 2-deoxy-D-ribose 1-phosphate degradation; D-glyceraldehyde 3-phosphate and acetaldehyde from 2-deoxy-alpha-D-ribose 1-phosphate: step 1/2. Its function is as follows. Isomerase that catalyzes the conversion of deoxy-ribose 1-phosphate (dRib-1-P) and ribose 1-phosphate (Rib-1-P) to deoxy-ribose 5-phosphate (dRib-5-P) and ribose 5-phosphate (Rib-5-P), respectively. In Geobacillus kaustophilus (strain HTA426), this protein is Phosphopentomutase.